A 317-amino-acid polypeptide reads, in one-letter code: tRNA(Ile)-lysidine synthase (317 aa).

30-35 (SGGSDS) provides a ligand contact to ATP.

It belongs to the tRNA(Ile)-lysidine synthase family.

The protein localises to the cytoplasm. The enzyme catalyses cytidine(34) in tRNA(Ile2) + L-lysine + ATP = lysidine(34) in tRNA(Ile2) + AMP + diphosphate + H(+). Functionally, ligates lysine onto the cytidine present at position 34 of the AUA codon-specific tRNA(Ile) that contains the anticodon CAU, in an ATP-dependent manner. Cytidine is converted to lysidine, thus changing the amino acid specificity of the tRNA from methionine to isoleucine. This is tRNA(Ile)-lysidine synthase from Chlamydia abortus (strain DSM 27085 / S26/3) (Chlamydophila abortus).